A 1068-amino-acid chain; its full sequence is Leucine zipper protein 1 (1068 aa).

A2 carries the N-acetylalanine modification. Residues 11-354 adopt a coiled-coil conformation; the sequence is ASNRHLRFKL…KLQVRKQKEL (344 aa). Disordered stretches follow at residues 251–292, 375–402, and 432–558; these read LSSK…VKDL, TKLKGHGSEASVSKHTSRELSPQHKRER, and AAKA…QAVE. Residues 254–292 show a composition bias toward basic and acidic residues; it reads KESKRKGSLDYLKQVENETRDKSENEKNRNQEDNKVKDL. 8 positions are modified to phosphoserine: S256, S261, S395, S513, S571, S575, S612, and S660. The segment covering 510–519 has biased composition (polar residues); that stretch reads RTFSDSTHVS. Positions 677-700 are disordered; sequence TTITPEPEPKPQPNSREKVKSRGG. T680 is subject to Phosphothreonine. 2 positions are modified to phosphoserine: S691 and S746. Residues 782 to 829 are disordered; the sequence is QKSTSKSVTSKVTSSITIYPSDSSGPRAVPSEAPRERHTSTSNIQVGP. Residues 785-796 are compositionally biased toward low complexity; that stretch reads TSKSVTSKVTSS. The interval 834–884 is required for interaction with FLNA; it reads AISNHVSSPLELSIHKHDITLQLTEAERVGDGSPKNRAEMVVSRSSILIKP. A Phosphoserine modification is found at S906. Residues 924–945 are disordered; it reads RDLKCSEDPPTGIGRNMEATNA. At T952 the chain carries Phosphothreonine. 2 disordered regions span residues 959–995 and 1033–1068; these read QPRSQPSEQGARRVGNSGDAPELSPRRTQSSLTASEV and NPLEHSELPGKQGLPEPEPVWTEERLHPAKPYAEED. Residues 984-994 show a composition bias toward polar residues; sequence RRTQSSLTASE. S988 carries the phosphoserine modification.

As to quaternary structure, component of the CERF-1 ISWI chromatin remodeling complex (also called the CECR2-containing remodeling factor (CERF) complex) at least composed of CECR2 and SMARCA1. Component of the CERF-5 ISWI chromatin remodeling complex at least composed of CECR2 and SMARCA5/SNF2H. LUZP1 is detected as part of the CERF-1 and CERF-5 complexes in embryonic stem (ES) cells where it is involved in complex stabilization but is not detected in the complexes in the testis. Interacts (via C-terminus) with LIMA1/EPLIN; both proteins restrict ciliation and may work together to regulate this process. Interacts with myosin light chain MYL9; the interaction results in inhibition of phosphorylation of MYL9 by DAPK3. Interacts with DAPK3; the interaction is likely to occur throughout the cell cycle and reduces the LUZP1-mediated suppression of MYL9 phosphorylation. Interacts with the chromosomal passenger complex (CPC); CPC kinase activity is required for localization of LUZP1 to the centromere. In terms of tissue distribution, predominantly expressed in the brain (at protein level).

It is found in the cytoplasm. The protein localises to the cytoskeleton. It localises to the microtubule organizing center. Its subcellular location is the centrosome. The protein resides in the cilium basal body. It is found in the midbody. The protein localises to the chromosome. It localises to the centromere. Its subcellular location is the spindle. The protein resides in the stress fiber. It is found in the nucleus. The protein localises to the cell projection. It localises to the dendrite. Its subcellular location is the perikaryon. The protein resides in the cell junction. It is found in the tight junction. In terms of biological role, F-actin cross-linking protein. Stabilizes actin and acts as a negative regulator of primary cilium formation. Positively regulates the phosphorylation of both myosin II and protein phosphatase 1 regulatory subunit PPP1R12A/MYPT1 and promotes the assembly of myosin II stacks within actin stress fibers. Inhibits the phosphorylation of myosin light chain MYL9 by DAPK3 and suppresses the constriction velocity of the contractile ring during cytokinesis. Binds to microtubules and promotes epithelial cell apical constriction by up-regulating levels of diphosphorylated myosin light chain (MLC) through microtubule-dependent inhibition of MLC dephosphorylation by myosin phosphatase. Involved in regulation of cell migration, nuclear size and centriole number, probably through regulation of the actin cytoskeleton. Component of the CERF-1 and CERF-5 chromatin remodeling complexes in embryonic stem cells where it acts to stabilize the complexes. Plays a role in embryonic brain and cardiovascular development. This is Leucine zipper protein 1 (Luzp1) from Mus musculus (Mouse).